The following is an 83-amino-acid chain: MYB-like transcription factor ETC1 (83 aa).

The region spanning 35-72 (AQEEEDLICRMYKLVGERWDLIAGRIPGRTAEEIERFW) is the Myb-like domain.

As to expression, expressed in developing trichomes and non-root hair cells.

The protein resides in the nucleus. Its function is as follows. MYB-type transcription factor involved in epidermal cell fate specification. Acts as a negative regulator of trichome development, by mediating lateral inhibition. Promotes the formation of hair developing cells in H position in root epidermis, probably by inhibiting non-hair cell formation. The polypeptide is MYB-like transcription factor ETC1 (ETC1) (Arabidopsis thaliana (Mouse-ear cress)).